Consider the following 112-residue polypeptide: Ferredoxin-2 (112 aa).

2 4Fe-4S ferredoxin-type domains span residues 2 to 30 and 31 to 60; these read TYVV…YEGE and NTLV…PDTE. Positions 9 and 17 each coordinate [3Fe-4S] cluster. Residues Cys-21, Cys-40, Cys-43, and Cys-46 each contribute to the [4Fe-4S] cluster site. Residue Cys-50 coordinates [3Fe-4S] cluster. Residues 85–103 show a composition bias toward basic and acidic residues; that stretch reads DPMPDHKKYDGETGKREKY. Positions 85–112 are disordered; it reads DPMPDHKKYDGETGKREKYFSPNPGTGD.

Requires [4Fe-4S] cluster as cofactor. The cofactor is [3Fe-4S] cluster.

In terms of biological role, ferredoxins are iron-sulfur proteins that transfer electrons in a wide variety of metabolic reactions. The sequence is that of Ferredoxin-2 (fdxA) from Rhodobacter capsulatus (strain ATCC BAA-309 / NBRC 16581 / SB1003).